The primary structure comprises 61 residues: Large ribosomal subunit protein uL30 (61 aa).

Belongs to the universal ribosomal protein uL30 family. As to quaternary structure, part of the 50S ribosomal subunit.

The protein is Large ribosomal subunit protein uL30 of Methylococcus capsulatus (strain ATCC 33009 / NCIMB 11132 / Bath).